A 119-amino-acid polypeptide reads, in one-letter code: MVKLRLKRIGKKKAAFYRIVATDARVKRDGEYIELIGTYNPINGYVKINYDLAYKWLLTGAQPTDTVRNLLSKEGLMNKLHNEKYVAKTTKSTKEKAATDKKAKVTKKPKTKTTTDVKK.

The span at T89–A103 shows a compositional bias: basic and acidic residues. Residues T89–K119 are disordered.

This sequence belongs to the bacterial ribosomal protein bS16 family.

This is Small ribosomal subunit protein bS16 from Spiroplasma kunkelii.